A 385-amino-acid chain; its full sequence is Outer membrane protein P2 (385 aa).

An N-terminal signal peptide occupies residues 1–20 (MKKTLAALIVGAFAASAANA).

This sequence belongs to the Gram-negative porin family. Homotrimer.

It is found in the cell outer membrane. Functionally, forms pores that allow passive diffusion of small molecules across the outer membrane. The protein is Outer membrane protein P2 (ompP2) of Haemophilus influenzae.